The sequence spans 149 residues: MAETFKIRKLEISDKRKGFIELLGQLTVTGSVTDEEFDRRFEEIRSYGDDHVICVIEEETSGKIAATGSVMIEKKFLRNCGKAGHIEDVVVDSRFRGKQLGKKVVEFLMDHCKSMGCYKVILDCSVENKVFYEKCGMSNKSIQMSKYFD.

The region spanning 5 to 149 is the N-acetyltransferase domain; sequence FKIRKLEISD…KSIQMSKYFD (145 aa). Substrate-binding positions include T27, 75–78, and 87–89; these read KFLR and EDV. 97-102 provides a ligand contact to acetyl-CoA; the sequence is GKQLGK. Position 118 to 119 (118 to 119) interacts with substrate; the sequence is YK. Residue 132-134 coordinates acetyl-CoA; the sequence is YEK.

This sequence belongs to the acetyltransferase family. GNA1 subfamily. In terms of assembly, homodimer. Expressed in roots, leaves, stems, cauline leaves, flowers and siliques.

It is found in the endoplasmic reticulum membrane. It catalyses the reaction D-glucosamine 6-phosphate + acetyl-CoA = N-acetyl-D-glucosamine 6-phosphate + CoA + H(+). It functions in the pathway nucleotide-sugar biosynthesis; UDP-N-acetyl-alpha-D-glucosamine biosynthesis; N-acetyl-alpha-D-glucosamine 1-phosphate from alpha-D-glucosamine 6-phosphate (route I): step 1/2. In terms of biological role, acetyltransferase involved in UDP-N-acetylglucosamine (UDP-GlcNAc) biosynthesis. UDP-GlcNAc is an essential metabolite that serves as an initial sugar donor for N-glycan synthesis and thus plays an important role in protein and lipid glycosylation. The polypeptide is Glucosamine 6-phosphate N-acetyltransferase (GNA1) (Arabidopsis thaliana (Mouse-ear cress)).